The primary structure comprises 214 residues: Sugar fermentation stimulation protein homolog (214 aa).

Belongs to the SfsA family.

In Aquifex aeolicus (strain VF5), this protein is Sugar fermentation stimulation protein homolog.